We begin with the raw amino-acid sequence, 465 residues long: Clusterin-like protein 1 (465 aa).

The N-terminal stretch at M1–C20 is a signal peptide. Residues L62–V107 are a coiled coil. 5 disulfides stabilise this stretch: C105–C333, C116–C325, C119–C322, C124–C315, and C131–C305. 2 N-linked (GlcNAc...) asparagine glycosylation sites follow: N196 and N257. The disordered stretch occupies residues L280–R300. N-linked (GlcNAc...) asparagine glycans are attached at residues N311, N351, N412, and N430.

This sequence belongs to the clusterin family.

The protein localises to the secreted. In Bos taurus (Bovine), this protein is Clusterin-like protein 1.